A 365-amino-acid chain; its full sequence is TD and POZ domain-containing protein 3 (365 aa).

The MATH domain maps to 19–149 (KFCYNWTISN…EDQFTICCKV (131 aa)). Positions 188–250 (TDCCLLVAGH…EMMGFIYTGK (63 aa)) constitute a BTB domain.

Belongs to the Tdpoz family.

The protein is TD and POZ domain-containing protein 3 of Mus musculus (Mouse).